Consider the following 367-residue polypeptide: Glutamate 5-kinase (367 aa).

Lys-10 lines the ATP pocket. Residues Ser-50, Asp-137, and Asn-149 each coordinate substrate. ATP contacts are provided by residues 169–170 (TD) and 211–217 (TGGMGTK). The 79-residue stretch at 275 to 353 (AGEITVDEGA…QQIDAILGYE (79 aa)) folds into the PUA domain.

It belongs to the glutamate 5-kinase family.

It is found in the cytoplasm. It carries out the reaction L-glutamate + ATP = L-glutamyl 5-phosphate + ADP. It participates in amino-acid biosynthesis; L-proline biosynthesis; L-glutamate 5-semialdehyde from L-glutamate: step 1/2. In terms of biological role, catalyzes the transfer of a phosphate group to glutamate to form L-glutamate 5-phosphate. This Cronobacter sakazakii (strain ATCC BAA-894) (Enterobacter sakazakii) protein is Glutamate 5-kinase.